The following is a 606-amino-acid chain: MNMFPSLMLTSLLMLTLPIITTTINTHKNSTYPYYVKNIISYAFITSLIPTMMFIHSGQEMIISNWHWMTIQTLKLSLSFKLDYFSMIFVPVALFVTWSIMEFSMWYMHSDPHITQFFKYLLMFLITMMILVTANNLFQLFIGWEGVGIMSFLLISWWYGRTDANTAALQAILYNRIGDIGFIMSMAWFLFNTNSWDLQQIFSLNYNHTDLPLMGLLLAATGKSAQFGLHPWLPSAMEGPTPVSALLHSSTMVVAGVFLLIRFHPLMENNKTVQTFTLCLGAITTLFTAICALTQNDIKKIIAFSTSSQLGLMIVTIGINQPYLAFLHICTHAFFKAMLFMCSGSIIHNLNDEQDIRKMGGLFKAMPFTSTSLIIGSLALTGMPFLTGFYSKDLIIETANTSYTNAWALLITLIATSLTAAYSTRMIFFTLLGQPRSLTLITINENNPLLMNSIKRLLIGSIFAGFFISNNIYPTTIPKTTMPHYLKLTALAVTILGFMMALELSLATYNLKLKHPSSPLKFSNLLGYFPTIFHRLPPLMGLSTSQKSASLLLDLIWLEKILPKSISQFQVKTSTLVSNQKGLIKLYFLSFLVTLTLSLLLLMPHG.

16 helical membrane-spanning segments follow: residues 4 to 24 (FPSL…TTTI), 38 to 58 (NIIS…IHSG), 87 to 107 (MIFV…SMWY), 114 to 134 (ITQF…LVTA), 140 to 160 (LFIG…WWYG), 171 to 191 (AILY…WFLF), 213 to 233 (LMGL…HPWL), 241 to 261 (TPVS…FLLI), 273 to 293 (VQTF…ICAL), 301 to 320 (IIAF…IGIN), 325 to 347 (AFLH…GSII), 366 to 386 (MPFT…MPFL), 409 to 429 (LLIT…MIFF), 457 to 477 (LLIG…PTTI), 488 to 508 (LTAL…SLAT), and 583 to 603 (LIKL…LLLM).

Belongs to the complex I subunit 5 family. As to quaternary structure, core subunit of respiratory chain NADH dehydrogenase (Complex I) which is composed of 45 different subunits.

The protein resides in the mitochondrion inner membrane. The enzyme catalyses a ubiquinone + NADH + 5 H(+)(in) = a ubiquinol + NAD(+) + 4 H(+)(out). Its function is as follows. Core subunit of the mitochondrial membrane respiratory chain NADH dehydrogenase (Complex I) which catalyzes electron transfer from NADH through the respiratory chain, using ubiquinone as an electron acceptor. Essential for the catalytic activity and assembly of complex I. This chain is NADH-ubiquinone oxidoreductase chain 5 (MT-ND5), found in Ceratotherium simum (White rhinoceros).